Consider the following 276-residue polypeptide: MKVKLADKHGFCFGVKRAIKLAESHQGGITLGPLIHNKKEIERLKNDFGVTVEESVENLPRGSEVIIRTHGIPKDDLAKLTQSAEKIIDATCPFVTKPQKICEIMSQEGYQIIIFGDINHPEVQGVMSYSSSEPIVVMSPKELFGAKLKEKVALVSQTTKKIEDFLGVASFLVQRCAEVRIFNTICNATFDNQEAARHLSQEVDIMIIAGGKNSSNTKQLLSICLEHCQDSYLIEDESELDPQWFTNKKTCGVTAGASTPEWIIERVVRTIEGYKG.

[4Fe-4S] cluster is bound at residue cysteine 12. Residues histidine 36 and histidine 70 each contribute to the (2E)-4-hydroxy-3-methylbut-2-enyl diphosphate site. Dimethylallyl diphosphate-binding residues include histidine 36 and histidine 70. 2 residues coordinate isopentenyl diphosphate: histidine 36 and histidine 70. [4Fe-4S] cluster is bound at residue cysteine 92. Position 120 (histidine 120) interacts with (2E)-4-hydroxy-3-methylbut-2-enyl diphosphate. Histidine 120 provides a ligand contact to dimethylallyl diphosphate. Position 120 (histidine 120) interacts with isopentenyl diphosphate. The Proton donor role is filled by glutamate 122. Threonine 158 is a (2E)-4-hydroxy-3-methylbut-2-enyl diphosphate binding site. Residue cysteine 186 participates in [4Fe-4S] cluster binding. Residues serine 214, serine 215, asparagine 216, and serine 258 each coordinate (2E)-4-hydroxy-3-methylbut-2-enyl diphosphate. Positions 214, 215, 216, and 258 each coordinate dimethylallyl diphosphate. 4 residues coordinate isopentenyl diphosphate: serine 214, serine 215, asparagine 216, and serine 258.

It belongs to the IspH family. The cofactor is [4Fe-4S] cluster.

It catalyses the reaction isopentenyl diphosphate + 2 oxidized [2Fe-2S]-[ferredoxin] + H2O = (2E)-4-hydroxy-3-methylbut-2-enyl diphosphate + 2 reduced [2Fe-2S]-[ferredoxin] + 2 H(+). It carries out the reaction dimethylallyl diphosphate + 2 oxidized [2Fe-2S]-[ferredoxin] + H2O = (2E)-4-hydroxy-3-methylbut-2-enyl diphosphate + 2 reduced [2Fe-2S]-[ferredoxin] + 2 H(+). It functions in the pathway isoprenoid biosynthesis; dimethylallyl diphosphate biosynthesis; dimethylallyl diphosphate from (2E)-4-hydroxy-3-methylbutenyl diphosphate: step 1/1. It participates in isoprenoid biosynthesis; isopentenyl diphosphate biosynthesis via DXP pathway; isopentenyl diphosphate from 1-deoxy-D-xylulose 5-phosphate: step 6/6. Catalyzes the conversion of 1-hydroxy-2-methyl-2-(E)-butenyl 4-diphosphate (HMBPP) into a mixture of isopentenyl diphosphate (IPP) and dimethylallyl diphosphate (DMAPP). Acts in the terminal step of the DOXP/MEP pathway for isoprenoid precursor biosynthesis. The polypeptide is 4-hydroxy-3-methylbut-2-enyl diphosphate reductase (Wolinella succinogenes (strain ATCC 29543 / DSM 1740 / CCUG 13145 / JCM 31913 / LMG 7466 / NCTC 11488 / FDC 602W) (Vibrio succinogenes)).